The following is a 96-amino-acid chain: Large ribosomal subunit protein uL23 (96 aa).

The protein belongs to the universal ribosomal protein uL23 family. In terms of assembly, part of the 50S ribosomal subunit. Contacts protein L29, and trigger factor when it is bound to the ribosome.

Its function is as follows. One of the early assembly proteins it binds 23S rRNA. One of the proteins that surrounds the polypeptide exit tunnel on the outside of the ribosome. Forms the main docking site for trigger factor binding to the ribosome. The chain is Large ribosomal subunit protein uL23 from Thermus thermophilus (strain ATCC BAA-163 / DSM 7039 / HB27).